The sequence spans 285 residues: Ribonuclease H1 (285 aa).

The segment at 72–126 (RSSSSPDGSKGQESAHEQKSQAKTSKRPREPLGEGEELPEPGPKHTRQDTEPAAV) is disordered. Residues 135 to 281 (MGESVIVYTD…ADRLAREGAK (147 aa)) form the RNase H type-1 domain. Mg(2+) is bound by residues Asp-144, Glu-185, Asp-209, and Asp-273.

Belongs to the RNase H family. In terms of assembly, monomer. The cofactor is Mg(2+).

It is found in the cytoplasm. The catalysed reaction is Endonucleolytic cleavage to 5'-phosphomonoester.. With respect to regulation, in the presence of magnesium, manganese is inhibitory. Its function is as follows. Endonuclease that specifically degrades the RNA of RNA-DNA hybrids. Plays a role in RNA polymerase II (RNAp II) transcription termination by degrading R-loop RNA-DNA hybrid formation at G-rich pause sites located downstream of the poly(A) site and behind the elongating RNAp II. In Mus musculus (Mouse), this protein is Ribonuclease H1 (Rnaseh1).